A 210-amino-acid polypeptide reads, in one-letter code: Large ribosomal subunit protein uL4 (210 aa).

The disordered stretch occupies residues 46–96 (QGNASTKTRAEVRGGGRKPWRQKGTGRARAGSNRSPLWRGGGVIFGPKPRD). Residues 60 to 71 (GGRKPWRQKGTG) show a composition bias toward basic residues.

This sequence belongs to the universal ribosomal protein uL4 family. Part of the 50S ribosomal subunit.

In terms of biological role, one of the primary rRNA binding proteins, this protein initially binds near the 5'-end of the 23S rRNA. It is important during the early stages of 50S assembly. It makes multiple contacts with different domains of the 23S rRNA in the assembled 50S subunit and ribosome. Its function is as follows. Forms part of the polypeptide exit tunnel. This chain is Large ribosomal subunit protein uL4, found in Gloeothece citriformis (strain PCC 7424) (Cyanothece sp. (strain PCC 7424)).